Here is a 207-residue protein sequence, read N- to C-terminus: Segregation and condensation protein B (207 aa).

The segment at 173-207 (DDTAESDNDSADLYYRQFEQTLNETGPETAPKGEQ) is disordered.

It belongs to the ScpB family. Homodimer. Homodimerization may be required to stabilize the binding of ScpA to the Smc head domains. Component of a cohesin-like complex composed of ScpA, ScpB and the Smc homodimer, in which ScpA and ScpB bind to the head domain of Smc. The presence of the three proteins is required for the association of the complex with DNA.

Its subcellular location is the cytoplasm. In terms of biological role, participates in chromosomal partition during cell division. May act via the formation of a condensin-like complex containing Smc and ScpA that pull DNA away from mid-cell into both cell halves. This is Segregation and condensation protein B from Latilactobacillus sakei subsp. sakei (strain 23K) (Lactobacillus sakei subsp. sakei).